We begin with the raw amino-acid sequence, 742 residues long: ATP-dependent RNA helicase DBP7 (742 aa).

The segment at 45–100 (GKTVSRKRKANTTGDEGIIPGRGENSIKKLHKESSYSSEEQEKYKGRNAHNTQGRT) is disordered. The Q motif motif lies at 143 to 172 (DQFASLGVTSLLVSHLEQKMRIKKPTSIQK). A Helicase ATP-binding domain is found at 178 to 372 (IIGNAGKNDF…NVALKDYKLI (195 aa)). 191 to 198 (AQTGSGKT) lines the ATP pocket. Residues 307-310 (DEGD) carry the DEAD box motif. In terms of domain architecture, Helicase C-terminal spans 405–605 (TLAATLNNIT…ILMPAFKDVN (201 aa)). Positions 701 to 726 (AMGLQSSKDGNSEKKPTKENSKNKMF) are disordered. The span at 710–722 (GNSEKKPTKENSK) shows a compositional bias: basic and acidic residues.

It belongs to the DEAD box helicase family. DDX31/DBP7 subfamily.

It is found in the nucleus. Its subcellular location is the nucleolus. The catalysed reaction is ATP + H2O = ADP + phosphate + H(+). Its function is as follows. ATP-binding RNA helicase involved in the biogenesis of 60S ribosomal subunits and is required for the normal formation of 25S and 5.8S rRNAs. This is ATP-dependent RNA helicase DBP7 (DBP7) from Saccharomyces cerevisiae (strain YJM789) (Baker's yeast).